The chain runs to 331 residues: HPr kinase/phosphorylase (331 aa).

Residues His153 and Lys174 contribute to the active site. 168 to 175 (GKSGLGKS) lines the ATP pocket. Ser175 serves as a coordination point for Mg(2+). The active-site Proton acceptor; for phosphorylation activity. Proton donor; for dephosphorylation activity is Asp192. The important for the catalytic mechanism of both phosphorylation and dephosphorylation stretch occupies residues 217 to 226 (MEIRGLGVVD). Glu218 is a Mg(2+) binding site. The active site involves Arg259. Positions 280 to 285 (PIFPGK) are important for the catalytic mechanism of dephosphorylation.

It belongs to the HPrK/P family. As to quaternary structure, homohexamer. Mg(2+) is required as a cofactor.

The catalysed reaction is [HPr protein]-L-serine + ATP = [HPr protein]-O-phospho-L-serine + ADP + H(+). It catalyses the reaction [HPr protein]-O-phospho-L-serine + phosphate + H(+) = [HPr protein]-L-serine + diphosphate. Catalyzes the ATP- as well as the pyrophosphate-dependent phosphorylation of a specific serine residue in HPr, a phosphocarrier protein of the phosphoenolpyruvate-dependent sugar phosphotransferase system (PTS). HprK/P also catalyzes the pyrophosphate-producing, inorganic phosphate-dependent dephosphorylation (phosphorolysis) of seryl-phosphorylated HPr (P-Ser-HPr). This Pelodictyon phaeoclathratiforme (strain DSM 5477 / BU-1) protein is HPr kinase/phosphorylase.